The chain runs to 534 residues: DNA-directed RNA polymerase III subunit RPC3 (534 aa).

A disordered region spans residues 161 to 181 (PSVPTTENSDPGPPPPAPTLV). Residue serine 194 is modified to Phosphoserine. The interval 197-228 (GKGKRRRSSDEDAAGEPKAKRPKYTTDNKEPI) is disordered. The span at 211-228 (GEPKAKRPKYTTDNKEPI) shows a compositional bias: basic and acidic residues.

It belongs to the eukaryotic RPC3/POLR3C RNA polymerase subunit family. As to quaternary structure, component of the RNA polymerase III complex consisting of 17 subunits: a ten-subunit horseshoe-shaped catalytic core composed of POLR3A/RPC1, POLR3B/RPC2, POLR1C/RPAC1, POLR1D/RPAC2, POLR3K/RPC10, POLR2E/RPABC1, POLR2F/RPABC2, POLR2H/RPABC3, POLR2K/RPABC4 and POLR2L/RPABC5; a mobile stalk composed of two subunits POLR3H/RPC8 and CRCP/RPC9, protruding from the core and functioning primarily in transcription initiation; and additional subunits homologous to general transcription factors of the RNA polymerase II machinery, POLR3C/RPC3-POLR3F/RPC6-POLR3G/RPC7 heterotrimer required for transcription initiation and POLR3D/RPC4-POLR3E/RPC5 heterodimer involved in both transcription initiation and termination. Directly interacts with POLR3G/RPC7 and POLR3GL. Directly interacts with POLR3F/RPC6. Interacts with GTF3C4. As part of the RNA polymerase III complex, interacts with PKP2.

The protein localises to the nucleus. Functionally, DNA-dependent RNA polymerase catalyzes the transcription of DNA into RNA using the four ribonucleoside triphosphates as substrates. Specific peripheric component of RNA polymerase III (Pol III) which synthesizes small non-coding RNAs including 5S rRNA, snRNAs, tRNAs and miRNAs from at least 500 distinct genomic loci. Part of POLR3C/RPC3-POLR3F/RPC6-POLR3G/RPC7 heterotrimer, coordinates the dynamics of Pol III stalk and clamp modules during the transition from apo to elongation state. Pol III plays a key role in sensing and limiting infection by intracellular bacteria and DNA viruses. Acts as a nuclear and cytosolic DNA sensor involved in innate immune response. Can sense non-self dsDNA that serves as template for transcription into dsRNA. The non-self RNA polymerase III transcripts, such as Epstein-Barr virus-encoded RNAs (EBERs) induce type I interferon and NF-kappa-B through the RIG-I pathway. Preferentially binds single-stranded DNA (ssDNA) in a sequence-independent manner. In Homo sapiens (Human), this protein is DNA-directed RNA polymerase III subunit RPC3.